The following is a 406-amino-acid chain: Methyltransferase cfoD (406 aa).

2 residues coordinate S-adenosyl-L-methionine: aspartate 270 and arginine 312. Residue histidine 315 is the Proton acceptor of the active site.

Belongs to the class I-like SAM-binding methyltransferase superfamily. Cation-independent O-methyltransferase family.

It participates in secondary metabolite biosynthesis; flavonoid biosynthesis. Methyltransferase; part of the gene cluster that mediates the biosynthesis of chlorflavonin, a fungal flavonoid with acetolactate synthase inhibitory activity. Within the pathway, cfoD is responsible for the methylation at position C3-OH of flavonoid. The pathway begins with the PKS-NRPS hybrid synthetase cfoA that uses benzoic acid or p-hydroxybenzoic acid as a starter unit with four rounds of chain elongation using malonyl-CoA to form the chalcone skeleton. Then, a new type of chalcone isomerase, cfoK, catalyzes the conversion of the chalcone into a flavanone by a histidine-mediated oxa-Michael addition mechanism. The desaturation of flavanone to flavone is catalyzed by a new type of flavone synthase, the flavin mononucleotide (FMN)-dependent oxidoreductase cfoJ. Monooxygenases cfoF, cfoG, and P450 cfoH are responsible for the hydroxylation of the flavonoid skeleton at sites C3, C8, and C2', respectively. Like cfoF, the dehydratase cfoI also plays a role in the hydroxylation of position C3. Methyltransferases cfoB, cfoC, and cfoD then catalyze the methylation of C7-OH, C8-OH, and C3-OH, respectively. Finally, the monooxygenase cfoE is responsible for the chlorination of flavonoid at position C3'. This chain is Methyltransferase cfoD, found in Aspergillus candidus.